We begin with the raw amino-acid sequence, 445 residues long: Gasdermin-A (445 aa).

The tract at residues 1-251 is triggers pyroptosis; it reads MTMFENVTRA…VILIQASDVG (251 aa). 9-13 provides a ligand contact to a cardiolipin; that stretch reads RALAR. Transmembrane regions (beta stranded) follow at residues 78–95, 99–120, 163–179, and 183–197; these read NFGF…DVDV, VKVK…TLSV, VTLE…SLPF, and LGLQ…AVTI.

The protein belongs to the gasdermin family. In terms of assembly, homooligomer; homooligomeric ring-shaped pore complex containing 18-36 subunits when inserted in the membrane. Cleavage by S.pyogenes SpeB relieves autoinhibition by releasing the N-terminal moiety (Gasdermin-A, N-terminal) that initiates pyroptosis. Post-translationally, palmitoylated. As to expression, expressed predominantly in the gastrointestinal tract and, at a lower level, in the skin. Also detected in mammary gland. In the gastrointestinal tract, mainly expressed in differentiated cells, including the differentiated cell layer of esophagus and mucus-secreting pit cells of the gastric epithelium. Down-regulated in gastric cancer cells.

It localises to the cytoplasm. It is found in the perinuclear region. The protein localises to the cytosol. The protein resides in the cell membrane. Its activity is regulated as follows. The full-length protein before cleavage is inactive: intramolecular interactions between N- and C-terminal domains mediate autoinhibition in the absence of activation signal. The intrinsic pyroptosis-inducing activity is carried by the released N-terminal moiety (Gasdermin-A, N-terminal) following cleavage by S.pyogenes effector protein SpeB. This form constitutes the precursor of the pore-forming protein and acts as a sensor of infection: upon infection by S.pyogenes, specifically cleaved by S.pyogenes effector protein SpeB in epithelial cells, releasing the N-terminal moiety (Gasdermin-A, N-terminal) that binds to membranes and forms pores, triggering pyroptosis. In terms of biological role, pore-forming protein that causes membrane permeabilization and pyroptosis. Released upon cleavage by S.pyogenes effector protein SpeB, and binds to membrane inner leaflet lipids. Homooligomerizes within the membrane and forms pores of 10-15 nanometers (nm) of inner diameter, triggering pyroptosis. Pyroptosis triggers the elimination of the infected skin cell, depriving the pathogen of its protective niche, while inducing an inflammatory response. This ultimately prevents bacterial penetration of the epithelial barrier and a subsequent systemic dissemination of the pathogen. Binds to cardiolipin and other acidic phospholipids, such as phosphatidylserine, which mediate its targeting to the inner leaflet membrane. The protein is Gasdermin-A of Homo sapiens (Human).